The primary structure comprises 175 residues: Ferritin light chain (175 aa).

The residue at position 2 (Ser2) is an N-acetylserine. One can recognise a Ferritin-like diiron domain in the interval 7 to 156 (QNYSTDVEAA…DHLTNLHRLG (150 aa)). The Fe cation site is built by Glu54, Glu57, Glu58, Glu61, and Glu64. The interval 54 to 61 (ELAEEKRE) is catalytic site for iron oxidation.

Belongs to the ferritin family. As to quaternary structure, oligomer of 24 subunits. There are two types of subunits: L (light) chain and H (heavy) chain. The major chain can be light or heavy, depending on the species and tissue type. The functional molecule forms a roughly spherical shell with a diameter of 12 nm and contains a central cavity into which the insoluble mineral iron core is deposited. Interacts with NCOA4.

It localises to the cytoplasmic vesicle. The protein localises to the autophagosome. It is found in the cytoplasm. Its subcellular location is the autolysosome. Its function is as follows. Stores iron in a soluble, non-toxic, readily available form. Important for iron homeostasis. Iron is taken up in the ferrous form and deposited as ferric hydroxides after oxidation. Also plays a role in delivery of iron to cells. Mediates iron uptake in capsule cells of the developing kidney. Delivery to lysosomes by the cargo receptor NCOA4 for autophagic degradation and release or iron. The protein is Ferritin light chain (FTL) of Pongo abelii (Sumatran orangutan).